The sequence spans 625 residues: tRNA uridine 5-carboxymethylaminomethyl modification enzyme MnmG (625 aa).

An FAD-binding site is contributed by 11–16 (GAGHAG). Residue 271–285 (GPRYCPSIETKIVTF) participates in NAD(+) binding.

Belongs to the MnmG family. As to quaternary structure, homodimer. Heterotetramer of two MnmE and two MnmG subunits. FAD is required as a cofactor.

Its subcellular location is the cytoplasm. NAD-binding protein involved in the addition of a carboxymethylaminomethyl (cmnm) group at the wobble position (U34) of certain tRNAs, forming tRNA-cmnm(5)s(2)U34. The sequence is that of tRNA uridine 5-carboxymethylaminomethyl modification enzyme MnmG from Parabacteroides distasonis (strain ATCC 8503 / DSM 20701 / CIP 104284 / JCM 5825 / NCTC 11152).